The sequence spans 161 residues: Glycine/sarcosine/betaine reductase complex component A2 (161 aa).

Sec42 is a catalytic residue. A non-standard amino acid (selenocysteine) is located at residue Sec42.

This sequence belongs to the GrdA family. Monomer. Component of the glycine, sarcosine and betaine reductase complexes, together with components B and C.

The enzyme catalyses acetyl phosphate + [thioredoxin]-disulfide + NH4(+) + H2O = [thioredoxin]-dithiol + glycine + phosphate + H(+). It carries out the reaction acetyl phosphate + methylamine + [thioredoxin]-disulfide + H2O = sarcosine + [thioredoxin]-dithiol + phosphate + H(+). It catalyses the reaction acetyl phosphate + trimethylamine + [thioredoxin]-disulfide + H2O = glycine betaine + [thioredoxin]-dithiol + phosphate + H(+). In the first step of glycine, betaine and sarcosine reductases, the substrate is bound to component PB via a Schiff base intermediate. Then the PB-activated substrate is nucleophilically attacked by the selenol anion of component PA to transform it to a carboxymethylated selenoether and the respective amine. By action of component PC, acetyl phosphate is formed, leaving component PA in its oxidized state. Finally component PA becomes reduced by the thioredoxin system to start a new catalytic cycle of reductive deamination. This chain is Glycine/sarcosine/betaine reductase complex component A2 (grdA2), found in Photobacterium profundum (strain SS9).